We begin with the raw amino-acid sequence, 124 residues long: Small ribosomal subunit protein uS13 (124 aa).

The segment at 99–124 is disordered; the sequence is RGQRTRTNARTRKGPRKTVGVMRKKS. The span at 101–124 shows a compositional bias: basic residues; the sequence is QRTRTNARTRKGPRKTVGVMRKKS.

The protein belongs to the universal ribosomal protein uS13 family. As to quaternary structure, part of the 30S ribosomal subunit. Forms a loose heterodimer with protein S19. Forms two bridges to the 50S subunit in the 70S ribosome.

Its function is as follows. Located at the top of the head of the 30S subunit, it contacts several helices of the 16S rRNA. In the 70S ribosome it contacts the 23S rRNA (bridge B1a) and protein L5 of the 50S subunit (bridge B1b), connecting the 2 subunits; these bridges are implicated in subunit movement. Contacts the tRNAs in the A and P-sites. The polypeptide is Small ribosomal subunit protein uS13 (Caldicellulosiruptor bescii (strain ATCC BAA-1888 / DSM 6725 / KCTC 15123 / Z-1320) (Anaerocellum thermophilum)).